A 1057-amino-acid polypeptide reads, in one-letter code: DNA-directed RNA polymerase subunit beta' (1057 aa).

Zn(2+) is bound by residues Cys60, Cys62, Cys75, and Cys78. Residues Asp449, Asp451, and Asp453 each contribute to the Mg(2+) site. Zn(2+) contacts are provided by Cys822, Cys896, Cys903, and Cys906.

It belongs to the RNA polymerase beta' chain family. The RNAP catalytic core consists of 2 alpha, 1 beta, 1 beta' and 1 omega subunit. When a sigma factor is associated with the core the holoenzyme is formed, which can initiate transcription. It depends on Mg(2+) as a cofactor. Zn(2+) serves as cofactor.

The enzyme catalyses RNA(n) + a ribonucleoside 5'-triphosphate = RNA(n+1) + diphosphate. Functionally, DNA-dependent RNA polymerase catalyzes the transcription of DNA into RNA using the four ribonucleoside triphosphates as substrates. The sequence is that of DNA-directed RNA polymerase subunit beta' from Staphylococcus aureus.